The chain runs to 449 residues: Glucose-6-phosphate isomerase (449 aa).

Residue Glu-291 is the Proton donor of the active site. Residues His-312 and Lys-426 contribute to the active site.

Belongs to the GPI family.

It localises to the cytoplasm. The catalysed reaction is alpha-D-glucose 6-phosphate = beta-D-fructose 6-phosphate. The protein operates within carbohydrate biosynthesis; gluconeogenesis. It functions in the pathway carbohydrate degradation; glycolysis; D-glyceraldehyde 3-phosphate and glycerone phosphate from D-glucose: step 2/4. In terms of biological role, catalyzes the reversible isomerization of glucose-6-phosphate to fructose-6-phosphate. This is Glucose-6-phosphate isomerase from Streptococcus pyogenes serotype M1.